Reading from the N-terminus, the 152-residue chain is Small ribosomal subunit protein uS19x (152 aa).

The protein belongs to the universal ribosomal protein uS19 family.

Its subcellular location is the cytoplasm. This chain is Small ribosomal subunit protein uS19x (RPS15D), found in Arabidopsis thaliana (Mouse-ear cress).